The chain runs to 344 residues: Transcription factor HRS1 (344 aa).

Residues 88–184 are disordered; that stretch reads IKDSSTSNEE…DGGGGRKQRR (97 aa). The span at 95–104 shows a compositional bias: acidic residues; the sequence is NEEEDEEFDD. Basic and acidic residues-rich tracts occupy residues 105–124 and 138–178; these read EHGN…KSDW and LLPK…DGGG. One can recognise an HTH myb-type domain in the interval 178 to 238; it reads GGRKQRRCWS…HLQKYRLHTR (61 aa). Residues 209–234 constitute a DNA-binding region (H-T-H motif); the sequence is PKQIREFMKVDGLTNDEVKSHLQKYR. Residues 269 to 291 show a composition bias toward low complexity; it reads STGKTTGGATTSSTTTTTGIYGT. The interval 269–322 is disordered; the sequence is STGKTTGGATTSSTTTTTGIYGTMAAPPPPQWPSHSNYRPSIIVDEGSGSHSEG.

In terms of tissue distribution, expressed in the root hair region and root hair cells.

Its subcellular location is the nucleus. Functionally, transcription factor involved in nitrate and phosphate signaling in roots. Integrates nitrate and phosphate starvation responses and adaptation of root architecture depending on nutrient availabilities. Acts downstream of the nitrate sensor and transporter NPF6.3/NRT1.1. Represses primary root development in response to phosphate deficiency conditions, only when nitrate is present. Involved in the modulation of primary root and root hair growth in phosphate-deprived environment. May be required for suppressing abscisic acid (ABA) signaling in germinating embryo axis, which promotes the timely germination of seeds. The sequence is that of Transcription factor HRS1 from Arabidopsis thaliana (Mouse-ear cress).